Here is a 330-residue protein sequence, read N- to C-terminus: 1,8-cineole synthase (330 aa).

D81 contacts Mg(2+). Positions 81-85 (DDHFD) match the DDXXD motif motif. R174 is a binding site for substrate. Residues N220 and S224 each coordinate Mg(2+). The NXXXSXXXE motif signature appears at 220–228 (NDVLSLEKE). Residue K227 participates in substrate binding. E228 contributes to the Mg(2+) binding site. Position 314 to 315 (314 to 315 (RY)) interacts with substrate.

The protein belongs to the terpene synthase family. Homodimer. Requires Mg(2+) as cofactor.

It catalyses the reaction (2E)-geranyl diphosphate + H2O = 1,8-cineole + diphosphate. The catalysed reaction is neryl diphosphate + H2O = 1,8-cineole + diphosphate. In terms of biological role, in vitro, catalyzes the formation of 1,8-cineole from geranyl diphosphate (GPP). Can also accept neryl diphosphate (NPP) as substrate to produce 1,8-cineole. In Streptomyces clavuligerus, this protein is 1,8-cineole synthase.